The following is an 887-amino-acid chain: MAFNNLIRNLAIGDNVYKYFDLNGLNDARYNELPISIKYLLEAAVRHCDEFHVLKKDVETILDWKNSQRNQAEIPFKPARVILQDFTGVPAVVDLAAMRDAVQNMGADPAKINPVCPVDLVIDHSVQVDHYGNLEALAKNQSIEFERNRERFNFLKWGSKAFDNLLIVPPGSGIVHQVNLEYLARTVFVGKDGVLYPDSVVGTDSHTTMIDGSGVLGWGVGGIEAEAVMLGQPISMVIPEVIGYELVGTLSDTVTSTDLVLTITKNLRDLGVVGKFVEFFGTGVASLSIADRATIANMCPEYGATIGFFPVDSRTIDYLTQTGRDTDYTQRVEQYLKSVGMFVNFTDDSYRPTYTTTLKLDLGSVVPSVSGPKRPHDRVELASLAQDFSKGLTDKISFKAFGLKPEDATKSVTITNHGRTAELTHGSVVIAAITSCTNTSNPSVMLAAGLVAKKAVELGLNVQPYVKTSLSPGSGVVTKYLEASGLLPYLEKIGFNIAGYGCMTCIGNSGPLDEPVTKAIEENNLVVAGVLSGNRNFEGRIHPHVRANYLASPPLAVLYSIIGNVNVDINGVLAVTPDGKEIRLADIWPTRKEVAKFEEEFVKPQFFREVYANIELGSTEWQQLECPAVKLYPWDDASTYIKKVPFFDGMTSELPSQSDIVNAHVLLNLGDSVTTDHISPAGSISKTSPAARFLAGRGVTPRDFNTYGARRGNDEIMARGTFANIRLVNKLASKVGPITLHVPSGEELDIFDAAQKYKDAGIPAIILAGKEYGCGSSRDWAAKGPFLQGVKAVIAESFERIHRSNLIGMGIIPFQYQAGQNADSLGLTGKEQFSIGVPDDLKPGQLIDVNVSNGSVFQVICRFDTEVELTYYRNGGILQYMIRKLIQ.

Substrate contacts are provided by residues Gln84 and 204-206; that span reads DSH. Cys436, Cys502, and Cys505 together coordinate [4Fe-4S] cluster. Substrate is bound by residues Arg535, Arg540, Arg697, and 777–778; that span reads SR.

This sequence belongs to the aconitase/IPM isomerase family. As to quaternary structure, interacts with gex-3. [4Fe-4S] cluster is required as a cofactor.

The protein localises to the cytoplasm. Its subcellular location is the cytosol. The catalysed reaction is citrate = D-threo-isocitrate. Functionally, catalyzes the isomerization of citrate to isocitrate via cis-aconitate. Has probably no RNA-binding activity. The sequence is that of Cytoplasmic aconitate hydratase (aco-1) from Caenorhabditis elegans.